Reading from the N-terminus, the 66-residue chain is Large ribosomal subunit protein bL35 (66 aa).

A compositionally biased stretch (basic residues) spans 1 to 26 (MPKMKTHRGSAKRFKKTASGKLKRGH). Residues 1-28 (MPKMKTHRGSAKRFKKTASGKLKRGHAY) are disordered.

The protein belongs to the bacterial ribosomal protein bL35 family.

This is Large ribosomal subunit protein bL35 from Geobacillus thermodenitrificans (strain NG80-2).